Reading from the N-terminus, the 108-residue chain is UPF0145 protein Npun_F4817 (108 aa).

It belongs to the UPF0145 family.

In Nostoc punctiforme (strain ATCC 29133 / PCC 73102), this protein is UPF0145 protein Npun_F4817.